The sequence spans 353 residues: E3 ubiquitin-protein ligase TRIM63 (353 aa).

The segment at 23–79 adopts an RING-type zinc-finger fold; that stretch reads CPICLEMFTKPVVILPCQHNLCRKCANDIFQAANPYWTSRGSSVSMSGGRFRCPTCR. The tract at residues 74–218 is interaction with TTN; that stretch reads RCPTCRHEVI…LSQKFDTLYA (145 aa). The B box-type zinc finger occupies 117–159; sequence GSHPMCKEHEDEKINIYCLTCEVPTCSMCKVFGIHKACEVAPL. The Zn(2+) site is built by Cys122, His125, Cys145, and His151. Positions 207 to 269 form a coiled coil; that stretch reads EELSQKFDTL…VETAIQSLDE (63 aa). The COS domain maps to 267-325; that stretch reads LDEPGGATFLLTAKQLIKSIVEASKGCQLGKTEQGFENMDFFTLDLEHIADALRAIDFG. The segment covering 326–344 has biased composition (acidic residues); it reads TDEEEEEFIEEEDQEEEES. A disordered region spans residues 326-353; the sequence is TDEEEEEFIEEEDQEEEESTEGKEEGHQ.

As to quaternary structure, homodimer. Homooligomer and heterooligomer. Interacts with SUMO2, titin/TTN and GMEB1. Interacts with TRIM54 and probably with TRIM55 and TNNI3. Forms a ternary complex with RACK1 and PRKCE. Interacts with CKM. In terms of tissue distribution, muscle specific. Selectively expressed in heart and skeletal muscle. Also expressed in the iris.

The protein localises to the cytoplasm. Its subcellular location is the nucleus. It is found in the myofibril. It localises to the sarcomere. The protein resides in the m line. The protein localises to the z line. The enzyme catalyses S-ubiquitinyl-[E2 ubiquitin-conjugating enzyme]-L-cysteine + [acceptor protein]-L-lysine = [E2 ubiquitin-conjugating enzyme]-L-cysteine + N(6)-ubiquitinyl-[acceptor protein]-L-lysine.. The protein operates within protein modification; protein ubiquitination. E3 ubiquitin ligase. Mediates the ubiquitination and subsequent proteasomal degradation of CKM, GMEB1 and HIBADH. Regulates the proteasomal degradation of muscle proteins under amino acid starvation, where muscle protein is catabolized to provide other organs with amino acids. Inhibits de novo skeletal muscle protein synthesis under amino acid starvation. Regulates proteasomal degradation of cardiac troponin I/TNNI3 and probably of other sarcomeric-associated proteins. May play a role in striated muscle atrophy and hypertrophy by regulating an anti-hypertrophic PKC-mediated signaling pathway. May regulate the organization of myofibrils through TTN in muscle cells. The polypeptide is E3 ubiquitin-protein ligase TRIM63 (TRIM63) (Homo sapiens (Human)).